The primary structure comprises 216 residues: Probable nicotinate-nucleotide adenylyltransferase (216 aa).

Belongs to the NadD family.

It carries out the reaction nicotinate beta-D-ribonucleotide + ATP + H(+) = deamido-NAD(+) + diphosphate. Its pathway is cofactor biosynthesis; NAD(+) biosynthesis; deamido-NAD(+) from nicotinate D-ribonucleotide: step 1/1. In terms of biological role, catalyzes the reversible adenylation of nicotinate mononucleotide (NaMN) to nicotinic acid adenine dinucleotide (NaAD). In Geotalea daltonii (strain DSM 22248 / JCM 15807 / FRC-32) (Geobacter daltonii), this protein is Probable nicotinate-nucleotide adenylyltransferase.